The sequence spans 163 residues: Glycine cleavage system H protein, mitochondrial (163 aa).

A mitochondrion-targeting transit peptide spans 1–34; sequence MALRMWASSAANALGVSCAPKSHLLPALSLSRCF. In terms of domain architecture, Lipoyl-binding spans 56 to 137; the sequence is VATIGITDHA…YEEGWMVKVK (82 aa). Lys96 is subject to N6-lipoyllysine.

The protein belongs to the GcvH family. As to quaternary structure, the glycine cleavage system is composed of four proteins: P, T, L and H. Requires (R)-lipoate as cofactor.

Its subcellular location is the mitochondrion. In terms of biological role, the glycine cleavage system catalyzes the degradation of glycine. The H protein shuttles the methylamine group of glycine from the P protein to the T protein. The chain is Glycine cleavage system H protein, mitochondrial (GDCSH) from Mesembryanthemum crystallinum (Common ice plant).